A 539-amino-acid polypeptide reads, in one-letter code: Phosphoenolpyruvate carboxykinase (ATP) (539 aa).

Residues Arg64, Tyr206, and Lys212 each contribute to the substrate site. ATP is bound by residues Lys212, His231, and 247 to 255 (GLSGTGKTT). Mn(2+)-binding residues include Lys212 and His231. Asp268 contacts Mn(2+). ATP-binding positions include Glu296, Arg332, 448–449 (RI), and Thr454. Arg332 is a substrate binding site.

The protein belongs to the phosphoenolpyruvate carboxykinase (ATP) family. Monomer. Mn(2+) is required as a cofactor.

Its subcellular location is the cytoplasm. It carries out the reaction oxaloacetate + ATP = phosphoenolpyruvate + ADP + CO2. The protein operates within carbohydrate biosynthesis; gluconeogenesis. Its function is as follows. Involved in the gluconeogenesis. Catalyzes the conversion of oxaloacetate (OAA) to phosphoenolpyruvate (PEP) through direct phosphoryl transfer between the nucleoside triphosphate and OAA. This Yersinia pseudotuberculosis serotype IB (strain PB1/+) protein is Phosphoenolpyruvate carboxykinase (ATP).